Here is a 68-residue protein sequence, read N- to C-terminus: Large ribosomal subunit protein uL30 (68 aa).

Belongs to the universal ribosomal protein uL30 family. Part of the 50S ribosomal subunit.

The chain is Large ribosomal subunit protein uL30 from Bartonella tribocorum (strain CIP 105476 / IBS 506).